We begin with the raw amino-acid sequence, 180 residues long: Translation initiation factor IF-3 (180 aa).

It belongs to the IF-3 family. As to quaternary structure, monomer.

It is found in the cytoplasm. Its function is as follows. IF-3 binds to the 30S ribosomal subunit and shifts the equilibrium between 70S ribosomes and their 50S and 30S subunits in favor of the free subunits, thus enhancing the availability of 30S subunits on which protein synthesis initiation begins. In Mesoplasma florum (strain ATCC 33453 / NBRC 100688 / NCTC 11704 / L1) (Acholeplasma florum), this protein is Translation initiation factor IF-3.